The chain runs to 122 residues: Cytochrome c3 hydrogenase large chain (122 aa).

The cofactor is Fe cation.

It catalyses the reaction 2 Fe(III)-[cytochrome c3] + H2 = 2 Fe(II)-[cytochrome c3] + 2 H(+). This chain is Cytochrome c3 hydrogenase large chain (hoxG), found in Acidithiobacillus ferrooxidans (Thiobacillus ferrooxidans).